The sequence spans 127 residues: Fatty acid binding protein 1-A, liver (127 aa).

The protein belongs to the calycin superfamily. Fatty-acid binding protein (FABP) family. In adults, weakly expressed in the intestine.

It localises to the cytoplasm. Binds free fatty acids and their coenzyme A derivatives, bilirubin, and some other small molecules in the cytoplasm. May be involved in intracellular lipid transport. This Danio rerio (Zebrafish) protein is Fatty acid binding protein 1-A, liver.